The sequence spans 1062 residues: Histone H3-lysine(4) N-trimethyltransferase ATX1 (1062 aa).

The segment at Asn-159 to Thr-184 is disordered. The region spanning Pro-301 to Gly-365 is the PWWP domain. The tract at residues Gln-401–Gly-424 is disordered. The FYR N-terminal domain occupies Asp-441–Asp-500. The region spanning Lys-504–Lys-586 is the FYR C-terminal domain. The segment at Arg-591–Cys-647 adopts a Phorbol-ester/DAG-type zinc-finger fold. An interaction with PIP5 region spans residues Tyr-599–Glu-1062. The PHD-type 1 zinc finger occupies Leu-609–Gly-660. Residues Pro-665–Thr-698 form a C2HC pre-PHD-type zinc finger. The segment at Leu-722–Arg-785 adopts a PHD-type 2 zinc-finger fold. The 119-residue stretch at Lys-898–Arg-1016 folds into the SET domain. His-908 is an S-adenosyl-L-methionine binding site. Ser-947 is a glycosylation site (O-linked (GlcNAc) serine). S-adenosyl-L-methionine contacts are provided by residues Tyr-954 and Asn-977–His-978. 4 residues coordinate Zn(2+): Cys-980, Cys-1026, Cys-1028, and Cys-1033. Residues Glu-1022–Asn-1038 form the Post-SET domain.

It belongs to the class V-like SAM-binding methyltransferase superfamily. Histone-lysine methyltransferase family. TRX/MLL subfamily. As to quaternary structure, interacts with PIP5. Interacts with WDR5A. Binds to CLF in the nucleus. Interacts with NRPB1 CTD domain, especially when NRPB1 is phosphorylated on 'Ser-5' of the heptapeptide repeat. Component of a nuclear protein complex containing at least TATA binding proteins (TBPs, e.g. TBP1 and TBP2) and ATX1. Associates with ULT1 for trimethylating 'Lys-4' on histone H3 (H3K4me3) at flower MADS box gene loci. Interacts with SEC. In terms of assembly, interacts with A4/EF1A in the cytoplasm on the nuclear periphery. Post-translationally, activated via O-glycosylation by SEC; this modification triggers FLC locus H3K4me3 histone modification, thus preventing premature flowering. Strongly expressed in cotyledons, but weak levels in the first true leaves, except at the hydothodes. Ubiquitous with higher levels in dividing tissues, including inflorescence meristem and flower primordia. Expressed also in leaves (especially at hydathodes), in growing inflorescence stems and in the mature flowers. In terms of tissue distribution, strongly expressed in young seedlings.

It localises to the nucleus. Its subcellular location is the cytoplasm. The protein resides in the perinuclear region. It catalyses the reaction L-lysyl(4)-[histone H3] + 3 S-adenosyl-L-methionine = N(6),N(6),N(6)-trimethyl-L-lysyl(4)-[histone H3] + 3 S-adenosyl-L-homocysteine + 3 H(+). It carries out the reaction L-lysyl-[protein] + 3 S-adenosyl-L-methionine = N(6),N(6),N(6)-trimethyl-L-lysyl-[protein] + 3 S-adenosyl-L-homocysteine + 3 H(+). Functionally, binds to the promoter and regulates the transcription of target genes, maintaining them in an active state; at promoters, required for TATA binding proteins (TBPs, e.g. TBP1 and TBP2) and RNA polymerase II (Pol II) recruitment, and, in a subsequent event, is recruited by a phosphorylated form of Pol II to the +300-bp region of transcribed sequences to trimethylates nucleosomes. Histone trimethyltransferase that trimethylates 'Lys-4' of histone H3 (H3K4me3); H3 'Lys-4' methylation represents a specific tag for epigenetic transcriptional activation and is required for efficient elongation of transcription but not for transcription initiation. Methylates only a limited fraction of nucleosomes of target genes (e.g. FLC, NAP, XTH33 and WRKY70). Necessary for WDR5A occupancy at WRKY70 and LTP7 genes. Required to maintain the active state of class A (AP1 and AP2), class B (PI and AP3) and class C (AG, AGAMOUS) floral homeotic genes at early stages of flower development. Together with CLF, modulates AG nucleosome methylation statement. Involved in epigenetic regulation (e.g. H3K4me3) of the floral repressors FLC, FT and SOC1 to prevent the transition from vegetative to reproductive development, independently of the photoperiod; binds the active FLC locus before flowering, but this interaction is released upon the transition to flowering. Regulates floral organ identity and flowering transition. Functions as a receptor for the lipid messenger phosphatidylinositol 5-phosphate (PI5P), which negatively regulates its transcriptional activation activity. Exhibits histone methylase activity and subsequent transcriptional regulation on WRKY70 gene, and, to a lower extent on secondary defense-response targets salicylic acid (SA)-responsive gene PR1 and jasmonic acid (JA)-responsive gene THI2.1. Involved in response to dehydration stress-response in both abscisic acid (ABA)-dependent and ABA-independent pathways; this includes specific genes (e.g. COR15A, ADH1, CBF4, RD29A, RD29B, RD26, ABF3, NCED3 and ABA3) epigenetic regulation (e.g. H3K4me3 and Pol II recruitment) to promote their transcription and influence ABA production. Implicated in stomatal closure regulation. Indirect repressor of XTH genes (XTH33). Necessary for the phosphorylation of Pol II NRPB1 (e.g. Ser5P and Ser2P) at the promoters of target genes, thus regulating both early and late stages of transcription. Controls root growth and architecture by regulating the timing of root development, stem cell niche maintenance (e.g. quiescent center (QC)), and cell patterning during primary and lateral root development. Modulates cell cycle duration, cell production, and the transition from cell proliferation in the root apical meristem (RAM) to cell elongation. Trimethylates A4/EF1A post-translationally at Lys-396. Required for actin cytoskeleton organization. This is Histone H3-lysine(4) N-trimethyltransferase ATX1 from Arabidopsis thaliana (Mouse-ear cress).